The chain runs to 139 residues: MVEERLNELELELVNIEYRKENKEQFLRVFIDKDNGVDLDMCSQANRAIKESFDEQEIPYDYLEVSSPGLDRVLKKERDWERFSGYRVRIKTRKSFPGPQRITGILLGFDSENIAVELEGELLKVPREMITIIRLHPEF.

It belongs to the RimP family.

The protein resides in the cytoplasm. Required for maturation of 30S ribosomal subunits. The sequence is that of Ribosome maturation factor RimP from Syntrophomonas wolfei subsp. wolfei (strain DSM 2245B / Goettingen).